The following is a 264-amino-acid chain: 5'-nucleotidase SurE (264 aa).

A divalent metal cation contacts are provided by Asp-10, Asp-11, Ser-43, and Asn-99.

The protein belongs to the SurE nucleotidase family. The cofactor is a divalent metal cation.

It localises to the cytoplasm. It carries out the reaction a ribonucleoside 5'-phosphate + H2O = a ribonucleoside + phosphate. Nucleotidase that shows phosphatase activity on nucleoside 5'-monophosphates. The sequence is that of 5'-nucleotidase SurE from Methanococcus vannielii (strain ATCC 35089 / DSM 1224 / JCM 13029 / OCM 148 / SB).